We begin with the raw amino-acid sequence, 294 residues long: Cytidine deaminase (294 aa).

2 consecutive CMP/dCMP-type deaminase domains span residues 48–168 (DEDA…FGPK) and 186–294 (LEGD…VLLG). 89-91 (NME) lines the substrate pocket. Zn(2+) is bound at residue histidine 102. Glutamate 104 acts as the Proton donor in catalysis. Positions 129 and 132 each coordinate Zn(2+).

This sequence belongs to the cytidine and deoxycytidylate deaminase family. Homodimer. It depends on Zn(2+) as a cofactor.

It carries out the reaction cytidine + H2O + H(+) = uridine + NH4(+). It catalyses the reaction 2'-deoxycytidine + H2O + H(+) = 2'-deoxyuridine + NH4(+). This enzyme scavenges exogenous and endogenous cytidine and 2'-deoxycytidine for UMP synthesis. The sequence is that of Cytidine deaminase from Citrobacter koseri (strain ATCC BAA-895 / CDC 4225-83 / SGSC4696).